The chain runs to 2603 residues: Ankyrin repeat domain-containing protein 17 (2603 aa).

Methionine 1 bears the N-acetylmethionine mark. Low complexity-rich tracts occupy residues 1 to 34 (MEKATVPVAAATAAEGEGSPPAVAAVAGPPAAAE) and 42 to 53 (SSRARSASSPRG). Positions 1–143 (MEKATVPVAA…SFILDQDDLE (143 aa)) are disordered. Residues serine 19 and serine 50 each carry the phosphoserine modification. The segment covering 63–79 (KKKPPQQQHHKAKRNRT) has biased composition (basic residues). Low complexity predominate over residues 84–94 (SSSESSSDSDN). Residues 95–111 (SGGGGGGGGGGGGGGGT) are compositionally biased toward gly residues. Acidic residues predominate over residues 116 to 131 (SEEEEDDDDEEEEVSE). Position 156 is a phosphoserine (serine 156). 15 ANK repeats span residues 233–262 (SDNRSLAEACSEGDVNAVRKLLIEGRSVNE), 266–295 (EGESLLCLACSAGYYELAQVLLAMHANVED), 300–329 (GDITPLMAAANGGHVKIVKLLLAHKADVNA), 333–362 (TGNTALTYACAGGYVDVVKVLLESGASIED), 366–395 (NGHTPLMEAGSAGHVEVARLLLENGAGINT), 400–429 (FKESALTLACYKGHLEMVRFLLEAGADQEH), 433–462 (EMHTALMEACMDGHVEVARLLLDSGAQVNM), 466–495 (SFESPLTLAACGGHVELAALLIERGASLEE), 499–528 (EGYTPLMEAAREGHEEMVALLLGQGANINA), 533–562 (TQETALTLACCGGFLEVADFLIKAGADIEL), 563–592 (GCSTPLMEAAQEGHLELVKYLLAAGANVHA), 596–625 (TGDTALTYACENGHTDVADVLLQAGADLEH), 629–658 (GGRTPLMKAARAGHVCTVQFLISKGANVNR), 663–692 (NDHTVLSLACAGGHLAVVELLLAHGADPTH), and 696–725 (DGSTMLIEAAKGGHTSVVCYLLDYPNNLLS). Residue lysine 318 forms a Glycyl lysine isopeptide (Lys-Gly) (interchain with G-Cter in SUMO2) linkage. A Phosphoserine modification is found at serine 803. ANK repeat units lie at residues 1082–1111 (NHDTALTLACAGGHEELVQTLLERGASIEH), 1115–1144 (KGFTPLILAATAGHVGVVEILLDNGADIEA), 1149–1178 (TKDTPLSLACSGGRQEVVELLLARGANKEH), 1182–1211 (SDYTPLSLAASGGYVNIIKILLNAGAEINS), 1217–1246 (LGISPLMLAAMNGHTAAVKLLLDMGSDINA), 1251–1280 (NRNTALTLACFQGRTEVVSLLLDRKANVEH), 1284–1313 (TGLTPLMEAASGGYAEVGRVLLDKGADVNA), 1319–1348 (SRDTALTIAADKGHYKFCELLIGRGAHIDV), 1352–1381 (KGNTPLWLAANGGHLDVVQLLVQAGADVDA), and 1385–1414 (RKITPLMAAFRKGHVKVVRYLVKEVNQFPS). Residues 1442–1526 (VQAKDRQAAE…EKEKLKVEDE (85 aa)) are a coiled coil. Serine 1457 carries the post-translational modification Phosphoserine. Disordered regions lie at residues 1479 to 1500 (AKREKRKEKRRKKKEEQRRKLE) and 1517 to 1717 (EKEK…QKRE). The segment covering 1481 to 1491 (REKRKEKRRKK) has biased composition (basic residues). 3 stretches are compositionally biased toward low complexity: residues 1531 to 1550 (TEPPSATTTTTIGISATWTT), 1602 to 1611 (ESKSSSTSES), and 1620 to 1632 (SSCSDESSNSNSS). Serine 1635 and serine 1639 each carry phosphoserine. 2 stretches are compositionally biased toward polar residues: residues 1642–1652 (VVTTTVSSKKQ) and 1675–1703 (LSETISEGTSNSLSTCTKSGPSPLSSPNG). 3 positions are modified to phosphoserine: serine 1696, serine 1700, and serine 1709. Positions 1725–1789 (RRSKKVSVPS…ESTRQATQLI (65 aa)) constitute a KH domain. Arginine 1874 is subject to Asymmetric dimethylarginine. Disordered stretches follow at residues 1906 to 1995 (PRLP…PSVR), 2011 to 2192 (TTVT…HKNS), and 2273 to 2332 (VVSS…YGSV). Composition is skewed to low complexity over residues 1950 to 1995 (SNQN…PSVR) and 2011 to 2028 (TTVTTTASNNNTAPTNAT). 6 positions are modified to phosphoserine: serine 2042, serine 2044, serine 2045, serine 2047, serine 2059, and serine 2067. Polar residues predominate over residues 2066-2078 (ASPNKVASSSEQE). A compositionally biased stretch (low complexity) spans 2095 to 2106 (SSSSSGSSSAHS). 2 stretches are compositionally biased toward polar residues: residues 2107–2127 (NQQQPPGSVSQEPRPPLQQSQ) and 2273–2303 (VVSSQSTPESMLSGKSSYLPNSDPLHQSDTS). A compositionally biased stretch (pro residues) spans 2308 to 2318 (FRPPLQRPAPS). Serine 2373 and serine 2401 each carry phosphoserine. Residues 2381–2423 (CSSASNDSSAQSVSSGVRAPSPAPSSVPLGSEKPSNVSQDRKV) form a disordered region. A compositionally biased stretch (low complexity) spans 2382–2411 (SSASNDSSAQSVSSGVRAPSPAPSSVPLGS).

Interacts (via N-terminus) with NOD2. Interacts with CDK2, MCM3, MCM5, MCM7, CDC6 and PCNA. Interacts with MAVS and IFIH1. Interacts (via the second ankyrin repeat cluster) with DDX58. In terms of assembly, (Microbial infection) Interacts with enterovirus 71/EV71 capsid protein VP1. Post-translationally, phosphorylated by CDK2. In terms of tissue distribution, ubiquitously expressed.

It localises to the cytoplasm. It is found in the nucleus. In terms of biological role, could play pivotal roles in cell cycle and DNA regulation. Involved in innate immune defense against viruse by positively regulating the viral dsRNA receptors DDX58 and IFIH1 signaling pathways. Involves in NOD2- and NOD1-mediated responses to bacteria suggesting a role in innate antibacterial immune pathways too. Target of enterovirus 71 which is the major etiological agent of HFMD (hand, foot and mouth disease). Could play a central role for the formation and/or maintenance of the blood vessels of the circulation system. This chain is Ankyrin repeat domain-containing protein 17 (ANKRD17), found in Homo sapiens (Human).